A 512-amino-acid chain; its full sequence is Maturase K (512 aa).

It belongs to the intron maturase 2 family. MatK subfamily.

It is found in the plastid. The protein localises to the chloroplast. Its function is as follows. Usually encoded in the trnK tRNA gene intron. Probably assists in splicing its own and other chloroplast group II introns. The chain is Maturase K from Erythranthe guttata (Yellow monkey flower).